The primary structure comprises 298 residues: 2-dehydro-3-deoxy-D-arabinonate dehydratase (298 aa).

Position 86 (I86) interacts with substrate. Residues E148, E150, and D169 each coordinate Mg(2+). The substrate site is built by K187 and T261.

Belongs to the FAH family. In terms of assembly, homotetramer. It depends on Mg(2+) as a cofactor. Requires Ca(2+) as cofactor.

The enzyme catalyses 2-dehydro-3-deoxy-D-arabinonate = 2,5-dioxopentanoate + H2O. Participates in a pentose oxidation pathway that converts D-arabinonate to 2-oxoglutarate. In Saccharolobus solfataricus (strain ATCC 35092 / DSM 1617 / JCM 11322 / P2) (Sulfolobus solfataricus), this protein is 2-dehydro-3-deoxy-D-arabinonate dehydratase.